The primary structure comprises 632 residues: tRNA uridine 5-carboxymethylaminomethyl modification enzyme MnmG (632 aa).

FAD-binding positions include 15-20 (GAGHAG), Ile127, and Ser182. Residue 276–290 (GPRYCPSIEDKIVRF) participates in NAD(+) binding. FAD is bound at residue Gln373.

This sequence belongs to the MnmG family. In terms of assembly, homodimer. Heterotetramer of two MnmE and two MnmG subunits. Requires FAD as cofactor.

It localises to the cytoplasm. NAD-binding protein involved in the addition of a carboxymethylaminomethyl (cmnm) group at the wobble position (U34) of certain tRNAs, forming tRNA-cmnm(5)s(2)U34. The sequence is that of tRNA uridine 5-carboxymethylaminomethyl modification enzyme MnmG from Streptococcus pyogenes serotype M3 (strain SSI-1).